Here is a 408-residue protein sequence, read N- to C-terminus: FAD-dependent monooxygenase nscC (408 aa).

Positions 1–20 (MAPPLPILIIGAGISGLTTA) are cleaved as a signal peptide. Residues E34 and A45 each contribute to the FAD site. N-linked (GlcNAc...) asparagine glycans are attached at residues N91 and N103. R119 contributes to the FAD binding site. 2 N-linked (GlcNAc...) asparagine glycosylation sites follow: N170 and N231. The FAD site is built by D328 and G341.

This sequence belongs to the paxM FAD-dependent monooxygenase family. The cofactor is FAD.

Its pathway is secondary metabolite biosynthesis. Its function is as follows. FAD-dependent monooxygenase; part of the gene cluster that mediates the biosynthesis of neosartoricin, a prenylated anthracenone that exhibits T-cell antiproliferative activity, suggestive of a physiological role as an immunosuppressive agent. The non-reducing polyketide synthase nscA probably synthesizes and cyclizes the decaketide backbone. The hydrolase nscB then mediates the product release through hydrolysis followed by spontaneous decarboxylation. The prenyltransferase nscD catalyzes the addition of the dimethylallyl group to the aromatic C5. The FAD-dependent monooxygenase nscC is then responsible for the stereospecific hydroxylation at C2. There is no gene encoding O-acetyltransferase in the nsc gene cluster; thus, the last step of 2-O-acetylation leading to neosartoricin may be catalyzed by an unidentified O-acetyltransferase. The protein is FAD-dependent monooxygenase nscC of Neosartorya fischeri (strain ATCC 1020 / DSM 3700 / CBS 544.65 / FGSC A1164 / JCM 1740 / NRRL 181 / WB 181) (Aspergillus fischerianus).